The sequence spans 465 residues: Ribulose bisphosphate carboxylase large chain (465 aa).

N6,N6,N6-trimethyllysine is present on K4. Substrate contacts are provided by N113 and T163. Catalysis depends on K165, which acts as the Proton acceptor. K167 contributes to the substrate binding site. The Mg(2+) site is built by K191, D193, and E194. Position 191 is an N6-carboxylysine (K191). Catalysis depends on H284, which acts as the Proton acceptor. The substrate site is built by R285, H317, and S369.

It belongs to the RuBisCO large chain family. Type I subfamily. As to quaternary structure, heterohexadecamer of 8 large chains and 8 small chains; disulfide-linked. The disulfide link is formed within the large subunit homodimers. Requires Mg(2+) as cofactor. In terms of processing, the disulfide bond which can form in the large chain dimeric partners within the hexadecamer appears to be associated with oxidative stress and protein turnover.

It localises to the plastid. Its subcellular location is the chloroplast. The enzyme catalyses 2 (2R)-3-phosphoglycerate + 2 H(+) = D-ribulose 1,5-bisphosphate + CO2 + H2O. The catalysed reaction is D-ribulose 1,5-bisphosphate + O2 = 2-phosphoglycolate + (2R)-3-phosphoglycerate + 2 H(+). Functionally, ruBisCO catalyzes two reactions: the carboxylation of D-ribulose 1,5-bisphosphate, the primary event in carbon dioxide fixation, as well as the oxidative fragmentation of the pentose substrate in the photorespiration process. Both reactions occur simultaneously and in competition at the same active site. This is Ribulose bisphosphate carboxylase large chain from Cyrilla racemiflora (Swamp titi).